The chain runs to 128 residues: Fluoride-specific ion channel FluC (128 aa).

4 helical membrane-spanning segments follow: residues 5 to 25 (IVAI…LSLA), 35 to 55 (LGTL…AVVF), 67 to 87 (LFVI…SVEV), and 96 to 116 (FGWA…LTAL). Glycine 75 and threonine 78 together coordinate Na(+).

It belongs to the fluoride channel Fluc/FEX (TC 1.A.43) family.

It is found in the cell inner membrane. It carries out the reaction fluoride(in) = fluoride(out). With respect to regulation, na(+) is not transported, but it plays an essential structural role and its presence is essential for fluoride channel function. Functionally, fluoride-specific ion channel. Important for reducing fluoride concentration in the cell, thus reducing its toxicity. The sequence is that of Fluoride-specific ion channel FluC from Burkholderia cenocepacia (strain HI2424).